The sequence spans 1161 residues: MGTAALLILLAGVSWAQREVAIQPGPLYRAEGSQISIWCNVRGYQGPSEQNFLWSIYLPTAPEKEIQIVGTNDPSFSYAIYSQRVRSGGIYVERVSGDRALLHIRQLQDQDTGEYECHTPNTDPSYHGSYSAKVNLQVIPDTLTVSSPAQTIQKVEGGSLQVTCEVSQNSSRHTHLSVSWLRLSEGEATEIISVTQNFSVRPGPSYAQKHSVGDVRLDKVGDSTFRLTLYNLHPSDQGDIYCEGTEWIQDPDGTWFPLTQKRSEGTSVTVLPTDKEFNVRLETERRTYNGGDTATLRCIIEAQNPGDRLFAVSWAFNSSLIASQSPGGVPSLTGEYARREDGGELRVGKDSDSVFSLKIFRLRPEDSGKYNCRVTERERGPSGELIDRESKRPKNIPISVLPLRTSLTVTVTANSSSVLEGVRLSLSCSVASLAGPQSRVSASWHLQDKQGRQRDVVRQDRDGVTWAGEQYRERLGTGGLRLLRSGSDTFSLELEGSQRTDAGSYECRVAEWVPAPDGEWQLLGERSAQANVDILALETGFAVTAITRTPGVTYFDSFDLQCILKPHYPPWVGVSVTWRFQPAGGGDTHDLVTFSRSGGVQWGERAGSFRGRSIVEKGDSTHTVRLSVSRASDSEAGKYQCVAELWRRETSGMWARLAERASNLLEIRVQRPVPRLQVTKVTRTLSVVEGSPVTLSCSIRSQSGPDSRFAVLWLVQQPSGAEGKLIGRSDAGTEFGTYPEGALLKGRLQLGVTAPGQYALTLQGARTDDSGSYYCQVEEWAMDPNQAWYRLAEETSGLTEIRVRPPDANLQLDQLPRNVSALEGQSVTVTCHVLNRTLPDSRLSLEWLCWRAGHMERRGLARLTVDGVLGSVEEEPGDVAPGLPSRVQVSQPSLGLYALTLRGTEVRDSGTYSCLVQEWLRDPRGQWYRRTEERSGATYVSVRQPDPQLQLDPSLLNVSVMEGGHFDLDCMVSSRSRPDSQLAISWSLQGTSRGAEPETLLNVDRSGVWAPLAPRWEGRLQQLQLSPTLFRLHVPRVGPGDSGNYTCLVQEWLLGPRGDWYLLAQDEAVIGWIRVQRKESNLQSTICANDALFYLVFFYPFPIFGILIITILLVRFRHRPTGKPGEGKNGVPLLWIKEPHLNYSPTCLEPPVLSIHPGTID.

The signal sequence occupies residues 1-16 (MGTAALLILLAGVSWA). Residues 17–1091 (QREVAIQPGP…LQSTICANDA (1075 aa)) are Extracellular-facing. Ig-like C2-type domains follow at residues 18 to 135 (REVA…AKVN), 140 to 258 (PDTL…WFPL), 272 to 382 (PTDK…RGPS), 402 to 523 (PLRT…WQLL), 541 to 651 (FAVT…RETS), 674 to 796 (PRLQ…EETS), 806 to 930 (PDAN…WYRR), and 947 to 1063 (PQLQ…WYLL). 2 disulfides stabilise this stretch: Cys-39/Cys-117 and Cys-164/Cys-242. An EWI motif motif is present at residues 246–248 (EWI). 6 cysteine pairs are disulfide-bonded: Cys-298-Cys-372, Cys-428-Cys-507, Cys-562-Cys-641, Cys-697-Cys-775, Cys-831-Cys-914, and Cys-970-Cys-1047. The chain crosses the membrane as a helical span at residues 1092–1112 (LFYLVFFYPFPIFGILIITIL). Residues 1113 to 1161 (LVRFRHRPTGKPGEGKNGVPLLWIKEPHLNYSPTCLEPPVLSIHPGTID) lie on the Cytoplasmic side of the membrane.

Its subcellular location is the membrane. This Xenopus tropicalis (Western clawed frog) protein is Immunoglobulin superfamily member 3 (igsf3).